We begin with the raw amino-acid sequence, 395 residues long: Protein phosphatase PP2A regulatory subunit A (395 aa).

HEAT repeat units lie at residues 44–81 (DCLAHILPVIVNFSQDKSWRVRYMVANQLYELCEAVGP), 83–120 (STKTELVPAYVRLLRDNVAEVRIAAAGKVSKFSRILSP), 122–159 (LAIQHILPCVKELSTDSSQHVRSALASVIMGMAPVLGK), 161–198 (ATIEQLLPIFLSLLKDEFPDVRLNIISKLDQVNQVIGI), 200–237 (LLSQSLLPAIVELAEDRHWRVRLAIIEYIPLLASQLGV), 239–276 (FFDDKLGALIMQWLKDKEYSIRNAAANNVKRLAAEEFG), 279–316 (WAMQHIIPQVLDMINDPHYLYRMTILHAISLLAPVLGS), and 318–355 (ITSTNLLPLVVNASKDRVPNIKFNVAKVLQSLIPIVDE).

This sequence belongs to the phosphatase 2A regulatory subunit A family. As to quaternary structure, PP2A exists in several trimeric forms, all of which consist of a core composed of a catalytic subunit associated with a 65 kDa regulatory subunit (PR65) (subunit A). The core complex associates with a third, variable subunit (subunit B), which confers distinct properties to the holoenzyme.

In terms of biological role, the PR65 subunit of protein phosphatase 2A serves as a scaffolding molecule to coordinate the assembly of the catalytic subunit and a variable regulatory B subunit. In Pisum sativum (Garden pea), this protein is Protein phosphatase PP2A regulatory subunit A.